The chain runs to 324 residues: Alkanal monooxygenase beta chain (324 aa).

The protein belongs to the bacterial luciferase oxidoreductase family. In terms of assembly, heterodimer of an alpha and a beta chain.

It catalyses the reaction a long-chain fatty aldehyde + FMNH2 + O2 = a long-chain fatty acid + hnu + FMN + H2O + 2 H(+). Light-emitting reaction in luminous bacteria. The specific role of the beta subunit is unknown, but it is absolutely required for bioluminescence activity. In Photorhabdus laumondii subsp. laumondii (strain DSM 15139 / CIP 105565 / TT01) (Photorhabdus luminescens subsp. laumondii), this protein is Alkanal monooxygenase beta chain (luxB).